The chain runs to 364 residues: MSGNTFGKLFAVTNFGESHGPAIGCVIDGCPPGMTLSVTDIQPDLDRRRPGTSKFVTQRNEPDAVEILSGVYEGKTTGTPICLLIKNTDQRSKDYGNIVQTFRPGHADYTYYQKYGIRDPRGGGRSSARLTAPMVAAGAVAKKWLFEHYGTVFRGCMTQIGELPITFESWDFVPDNPFFAPIADVSALASYMEVLRKAGDSCGARIRVSASNVPVGLGEPLFDKLDADIAYAMMGINAVKGVEIGAGFASVAQHGSSHGDSLSPKGFKSNNAGGVLGGISSGQDLELSIAIKPTSSILTPRESIDMAGQSTEVITKGRHDPCVGIRATPIAEAMLALVVMDHALRQRAQCGDVTVNLKPIKASI.

Arginine 48 serves as a coordination point for NADP(+). FMN is bound by residues 125–127 (RSS), 237–238 (NA), glycine 277, 292–296 (KPTSS), and arginine 318.

The protein belongs to the chorismate synthase family. Homotetramer. FMNH2 serves as cofactor.

It catalyses the reaction 5-O-(1-carboxyvinyl)-3-phosphoshikimate = chorismate + phosphate. Its pathway is metabolic intermediate biosynthesis; chorismate biosynthesis; chorismate from D-erythrose 4-phosphate and phosphoenolpyruvate: step 7/7. In terms of biological role, catalyzes the anti-1,4-elimination of the C-3 phosphate and the C-6 proR hydrogen from 5-enolpyruvylshikimate-3-phosphate (EPSP) to yield chorismate, which is the branch point compound that serves as the starting substrate for the three terminal pathways of aromatic amino acid biosynthesis. This reaction introduces a second double bond into the aromatic ring system. The chain is Chorismate synthase from Albidiferax ferrireducens (strain ATCC BAA-621 / DSM 15236 / T118) (Rhodoferax ferrireducens).